A 571-amino-acid polypeptide reads, in one-letter code: Acetolactate synthase large subunit (571 aa).

E51 is a thiamine diphosphate binding site. Residues R153, 261 to 282, and 304 to 323 contribute to the FAD site; these read HGTYEANMTMHHADVIFAIGVR and DIDPTSISKTVSANIPIVGD. Positions 394-474 are thiamine pyrophosphate binding; the sequence is QHQMFTALYY…VLILNLNNSS (81 aa). 2 residues coordinate Mg(2+): D445 and N472.

Belongs to the TPP enzyme family. As to quaternary structure, dimer of large and small chains. Requires Mg(2+) as cofactor. Thiamine diphosphate is required as a cofactor.

It catalyses the reaction 2 pyruvate + H(+) = (2S)-2-acetolactate + CO2. It participates in amino-acid biosynthesis; L-isoleucine biosynthesis; L-isoleucine from 2-oxobutanoate: step 1/4. Its pathway is amino-acid biosynthesis; L-valine biosynthesis; L-valine from pyruvate: step 1/4. The polypeptide is Acetolactate synthase large subunit (ilvI) (Buchnera aphidicola subsp. Acyrthosiphon pisum (strain APS) (Acyrthosiphon pisum symbiotic bacterium)).